Reading from the N-terminus, the 243-residue chain is Ribonuclease PH (243 aa).

Phosphate contacts are provided by residues Arg-91 and 129–131 (GTR).

It belongs to the RNase PH family. As to quaternary structure, homohexameric ring arranged as a trimer of dimers.

The catalysed reaction is tRNA(n+1) + phosphate = tRNA(n) + a ribonucleoside 5'-diphosphate. In terms of biological role, phosphorolytic 3'-5' exoribonuclease that plays an important role in tRNA 3'-end maturation. Removes nucleotide residues following the 3'-CCA terminus of tRNAs; can also add nucleotides to the ends of RNA molecules by using nucleoside diphosphates as substrates, but this may not be physiologically important. Probably plays a role in initiation of 16S rRNA degradation (leading to ribosome degradation) during starvation. The sequence is that of Ribonuclease PH from Burkholderia thailandensis (strain ATCC 700388 / DSM 13276 / CCUG 48851 / CIP 106301 / E264).